A 525-amino-acid chain; its full sequence is Bifunctional purine biosynthesis protein PurH (525 aa).

Residues 1–149 (MSDPVIKRAL…KNHESVTVIT (149 aa)) enclose the MGS-like domain.

This sequence belongs to the PurH family.

The catalysed reaction is (6R)-10-formyltetrahydrofolate + 5-amino-1-(5-phospho-beta-D-ribosyl)imidazole-4-carboxamide = 5-formamido-1-(5-phospho-D-ribosyl)imidazole-4-carboxamide + (6S)-5,6,7,8-tetrahydrofolate. The enzyme catalyses IMP + H2O = 5-formamido-1-(5-phospho-D-ribosyl)imidazole-4-carboxamide. It functions in the pathway purine metabolism; IMP biosynthesis via de novo pathway; 5-formamido-1-(5-phospho-D-ribosyl)imidazole-4-carboxamide from 5-amino-1-(5-phospho-D-ribosyl)imidazole-4-carboxamide (10-formyl THF route): step 1/1. Its pathway is purine metabolism; IMP biosynthesis via de novo pathway; IMP from 5-formamido-1-(5-phospho-D-ribosyl)imidazole-4-carboxamide: step 1/1. The sequence is that of Bifunctional purine biosynthesis protein PurH from Chlorobium phaeobacteroides (strain BS1).